Here is a 380-residue protein sequence, read N- to C-terminus: Tryptophan--tRNA ligase 2 (380 aa).

The 'HIGH' region motif lies at 74–82; the sequence is PSGPMHLGH. The 'KMSKS' region motif lies at 249–253; it reads KMSSS.

This sequence belongs to the class-I aminoacyl-tRNA synthetase family.

It localises to the cytoplasm. It carries out the reaction tRNA(Trp) + L-tryptophan + ATP = L-tryptophyl-tRNA(Trp) + AMP + diphosphate + H(+). This is Tryptophan--tRNA ligase 2 from Halobacterium salinarum (strain ATCC 700922 / JCM 11081 / NRC-1) (Halobacterium halobium).